The following is a 388-amino-acid chain: Phosphoribosylformylglycinamidine cyclo-ligase, chloroplastic/mitochondrial (388 aa).

Belongs to the AIR synthase family.

The protein localises to the plastid. Its subcellular location is the chloroplast. It is found in the mitochondrion. The enzyme catalyses 2-formamido-N(1)-(5-O-phospho-beta-D-ribosyl)acetamidine + ATP = 5-amino-1-(5-phospho-beta-D-ribosyl)imidazole + ADP + phosphate + H(+). Its pathway is purine metabolism; IMP biosynthesis via de novo pathway; 5-amino-1-(5-phospho-D-ribosyl)imidazole from N(2)-formyl-N(1)-(5-phospho-D-ribosyl)glycinamide: step 2/2. This Vigna unguiculata (Cowpea) protein is Phosphoribosylformylglycinamidine cyclo-ligase, chloroplastic/mitochondrial (PUR5).